We begin with the raw amino-acid sequence, 395 residues long: Proteinase-activated receptor 2 (395 aa).

Positions 1–25 (MRSPSAAWLLGGVLLLAASGSCNRT) are cleaved as a signal peptide. N-linked (GlcNAc...) asparagine glycans are attached at residues N23 and N29. Residues 26-34 (VPGNKSKGR) constitute a propeptide, removed for receptor activation. Residues 35–69 (SLIGNVDNSPVVAGRGVTVKPGFSVDEFSTSVLTG) are Extracellular-facing. Residues 70–99 (KLTTVFLPVVYTIVFVVGLPSNGMALWVFL) form a helical membrane-spanning segment. At 100 to 106 (FRTKKKH) the chain is on the cytoplasmic side. The helical transmembrane segment at 107–135 (PAVIYMANLALADLLSVTWFPLKIAYHIH) threads the bilayer. The Extracellular segment spans residues 136–147 (GNNWIYGESLCK). The cysteines at positions 146 and 224 are disulfide-linked. A helical membrane pass occupies residues 148 to 175 (VLIGFFYGNMYCSILFMTCLSVQRYWVI). Residues 176-181 (VNPMVH) are Cytoplasmic-facing. Residues 182–209 (PKKQANIAIGVSLGIWLLILLLTIPLYV) form a helical membrane-spanning segment. The Extracellular portion of the chain corresponds to 210–233 (VKQTSYIRALNITTCHDVLPEEVL). Residue N220 is glycosylated (N-linked (GlcNAc...) asparagine). A helical membrane pass occupies residues 234-267 (VGDMFNYFLSLAIGVFLFPAFLTASAYVLMIRTL). At 268–275 (QSSAMDES) the chain is on the cytoplasmic side. Residues 276–315 (SGKKRRRAIKLIVTVLAMYLICFTPSNLLLVVHYFLIKTR) form a helical membrane-spanning segment. The Extracellular portion of the chain corresponds to 316–321 (GQSHVY). Residues 322 to 345 (ALYIVALCLSTLNSCIDPFVYYFI) traverse the membrane as a helical segment. At 346-395 (SQDFRDHAKNALLCRSVRTVKRMQVSLSSKKFSGKSSSYSSSSTSVKGSY) the chain is on the cytoplasmic side. C359 carries the S-palmitoyl cysteine lipid modification.

The protein belongs to the G-protein coupled receptor 1 family. As to quaternary structure, interacts with TLR4, COPS5 and TMED2. Interacts with GNAQ, GNA11, GNA12, GNA13 and GNA14. A proteolytic cleavage generates a new N-terminus that functions as a tethered ligand. Activating serine proteases include trypsin, mast cell tryptase, coagulation factors VII and Xa, myeloblastin/PRTN3 and membrane-type serine protease 1/ST14. Proposed subsequent cleavage by serine proteases is leading to receptor deactivation and include neutrophil elastase and cathepsin G. At least in part, implicated proteases are also shown to activate the receptor; the glycosylation status of the receptor is thought to contribute to the difference. Post-translationally, N-glycosylated and sialylated. In terms of processing, multiple phosphorylated on serine and threonine residues in the cytoplasmic region upon receptor activation; required for receptor desensitization and recruitment of beta-arrestin. Monoubiquitinated by CBL at the plasma membrane and in early endosomes; not required for receptor endocytosis but for translocation to late endosomes or lysosomes. Deubiquitination involves STAMBP and USP8; required for lysosomal trafficking and receptor degradation.

It localises to the cell membrane. In terms of biological role, receptor for trypsin and trypsin-like enzymes coupled to G proteins. Its function is mediated through the activation of several signaling pathways including phospholipase C (PLC), intracellular calcium, mitogen-activated protein kinase (MAPK), I-kappaB kinase/NF-kappaB and Rho. Can also be transactivated by cleaved F2R/PAR1. Involved in modulation of inflammatory responses and regulation of innate and adaptive immunity, and acts as a sensor for proteolytic enzymes generated during infection. Generally is promoting inflammation. Can signal synergistically with TLR4 and probably TLR2 in inflammatory responses and modulates TLR3 signaling. Has a protective role in establishing the endothelial barrier; the activity involves coagulation factor X. Regulates endothelial cell barrier integrity during neutrophil extravasation, probably following proteolytic cleavage by PRTN3. Proposed to have a bronchoprotective role in airway epithelium, but also shown to compromise the airway epithelial barrier by interrupting E-cadherin adhesion. Involved in the regulation of vascular tone; activation results in hypotension presumably mediated by vasodilation. Associates with a subset of G proteins alpha subunits such as GNAQ, GNA11, GNA14, GNA12 and GNA13, but probably not with G(o) alpha, G(i) subunit alpha-1 and G(i) subunit alpha-2. Believed to be a class B receptor which internalizes as a complex with arrestin and traffic with it to endosomal vesicles, presumably as desensitized receptor, for extended periods of time. Mediates inhibition of TNF-alpha stimulated JNK phosphorylation via coupling to GNAQ and GNA11; the function involves dissociation of RIPK1 and TRADD from TNFR1. Mediates phosphorylation of nuclear factor NF-kappa-B RELA subunit at 'Ser-536'; the function involves IKBKB and is predominantly independent of G proteins. Involved in cellular migration. Involved in cytoskeletal rearrangement and chemotaxis through beta-arrestin-promoted scaffolds; the function is independent of GNAQ and GNA11 and involves promotion of cofilin dephosphorylation and actin filament severing. Induces redistribution of COPS5 from the plasma membrane to the cytosol and activation of the JNK cascade is mediated by COPS5. Involved in the recruitment of leukocytes to the sites of inflammation and is the major PAR receptor capable of modulating eosinophil function such as pro-inflammatory cytokine secretion, superoxide production and degranulation. During inflammation promotes dendritic cell maturation, trafficking to the lymph nodes and subsequent T-cell activation. Involved in antimicrobial response of innate immune cells; activation enhances phagocytosis of Gram-positive and killing of Gram-negative bacteria. Acts synergistically with interferon-gamma in enhancing antiviral responses. Probably mediates activation of pro-inflammatory and pro-fibrotic responses in fibroblasts, triggered by coagulation factor Xa (F10). Probably mediates activation of barrier protective signaling responses in endothelial cells, triggered by coagulation factor Xa (F10). In Bos taurus (Bovine), this protein is Proteinase-activated receptor 2 (F2RL1).